Here is a 40-residue protein sequence, read N- to C-terminus: Large ribosomal subunit protein bL36A (40 aa).

The protein belongs to the bacterial ribosomal protein bL36 family.

This Paenarthrobacter aurescens (strain TC1) protein is Large ribosomal subunit protein bL36A.